Consider the following 216-residue polypeptide: Endoplasmic reticulum vesicle protein 25 (216 aa).

A signal peptide spans 1–20; the sequence is MASLKSLLSGFLLLAGAAQA. Over 21 to 185 the chain is Lumenal; that stretch reads LKFDLEATSS…TNESTNNRVK (165 aa). A GOLD domain is found at 36 to 126; sequence RRCIRNFVNK…RRHVELDIDI (91 aa). The chain crosses the membrane as a helical span at residues 186–206; it reads WFGMATTFLLIALWGWQIMYL. Over 207-216 the chain is Cytoplasmic; it reads RAYFRSKHLI.

This sequence belongs to the EMP24/GP25L family.

It is found in the endoplasmic reticulum membrane. It localises to the golgi apparatus membrane. In terms of biological role, constituent of COPII-coated endoplasmic reticulum-derived transport vesicles. Required for efficient transport of a subset of secretory proteins to the Golgi. Facilitates retrograde transport from the Golgi to the endoplasmic reticulum. This Neurospora crassa (strain ATCC 24698 / 74-OR23-1A / CBS 708.71 / DSM 1257 / FGSC 987) protein is Endoplasmic reticulum vesicle protein 25 (erv-1).